A 549-amino-acid polypeptide reads, in one-letter code: Protein EPD1 (549 aa).

The first 22 residues, 1–22 (MLLNSLFPSILAAATFVTSAAA), serve as a signal peptide directing secretion. N40 and N59 each carry an N-linked (GlcNAc...) asparagine glycan. Cysteines 72 and 101 form a disulfide. N-linked (GlcNAc...) asparagine glycosylation is found at N147 and N163. Intrachain disulfides connect C214–C347, C232–C263, C369–C420, C378–C444, and C397–C402. Residues 336–356 (AESASGVSRTSCPTNTDNWEA) show a composition bias toward polar residues. The interval 336 to 361 (AESASGVSRTSCPTNTDNWEASTELP) is disordered. Residue N383 is glycosylated (N-linked (GlcNAc...) asparagine). N408 and N438 each carry an N-linked (GlcNAc...) asparagine glycan. Residues 479-519 (SVRTDTSEATTDSGSGSSNSGSASSSKSTSSSTSSGSSGSK) form a disordered region. The span at 487–519 (ATTDSGSGSSNSGSASSSKSTSSSTSSGSSGSK) shows a compositional bias: low complexity.

The protein belongs to the glycosyl hydrolase 72 family.

It localises to the cell membrane. The chain is Protein EPD1 (EPD1) from Candida maltosa (Yeast).